Here is a 265-residue protein sequence, read N- to C-terminus: Chalcone synthase (265 aa).

The active site involves C40.

The protein belongs to the thiolase-like superfamily. Chalcone/stilbene synthases family.

It catalyses the reaction (E)-4-coumaroyl-CoA + 3 malonyl-CoA + 3 H(+) = 2',4,4',6'-tetrahydroxychalcone + 3 CO2 + 4 CoA. The protein operates within secondary metabolite biosynthesis; flavonoid biosynthesis. Functionally, the primary product of this enzyme is 4,2',4',6'-tetrahydroxychalcone (also termed naringenin-chalcone or chalcone) which can under specific conditions spontaneously isomerize into naringenin. The chain is Chalcone synthase (CHSII) from Medicago sativa (Alfalfa).